Here is a 471-residue protein sequence, read N- to C-terminus: Maintenance of mitochondrial morphology protein 1 (471 aa).

Residues 1–21 lie on the Lumenal side of the membrane; that stretch reads MSSPQNTSCPPSQHSLSFTQG. The helical transmembrane segment at 22–42 threads the bilayer; the sequence is LLLGQLSVVLLIGAFIKFFIF. Over 43-471 the chain is Cytoplasmic; it reads GESPSSSSRG…GSLPGAPAVA (429 aa). The SMP-LTD domain occupies 128–370; it reads QPESLDWFNV…EPRVQLVALP (243 aa). Disordered regions lie at residues 271–306, 395–415, and 448–471; these read GTTESSPHLPHPENQNESKPSRQDPEIPTNKDGVRS, EDPATKATHSGFTPVNANRDG, and RGDTQSVGEQLRIPGSLPGAPAVA. Residues 280–295 show a composition bias toward basic and acidic residues; it reads PHPENQNESKPSRQDP. Polar residues predominate over residues 401 to 410; it reads ATHSGFTPVN.

It belongs to the MMM1 family. Homodimer. Component of the ER-mitochondria encounter structure (ERMES) or MDM complex, composed of MMM1, MDM10, MDM12 and MDM34. An MMM1 homodimer associates with one molecule of MDM12 on each side in a pairwise head-to-tail manner, and the SMP-LTD domains of MMM1 and MDM12 generate a continuous hydrophobic tunnel for phospholipid trafficking.

The protein localises to the endoplasmic reticulum membrane. Functionally, component of the ERMES/MDM complex, which serves as a molecular tether to connect the endoplasmic reticulum (ER) and mitochondria. Components of this complex are involved in the control of mitochondrial shape and protein biogenesis, and function in nonvesicular lipid trafficking between the ER and mitochondria. The MDM12-MMM1 subcomplex functions in the major beta-barrel assembly pathway that is responsible for biogenesis of all outer membrane beta-barrel proteins, and acts in a late step after the SAM complex. The MDM10-MDM12-MMM1 subcomplex further acts in the TOM40-specific pathway after the action of the MDM12-MMM1 complex. Essential for establishing and maintaining the structure of mitochondria and maintenance of mtDNA nucleoids. In Arthroderma otae (strain ATCC MYA-4605 / CBS 113480) (Microsporum canis), this protein is Maintenance of mitochondrial morphology protein 1.